We begin with the raw amino-acid sequence, 183 residues long: Peptide deformylase-like (183 aa).

The active site involves Glu-140.

The protein belongs to the polypeptide deformylase family.

This Rickettsia conorii (strain ATCC VR-613 / Malish 7) protein is Peptide deformylase-like.